We begin with the raw amino-acid sequence, 309 residues long: Ribonuclease Z (309 aa).

Residues His-63, His-65, Asp-67, His-68, His-145, Asp-216, and His-274 each coordinate Zn(2+). The Proton acceptor role is filled by Asp-67.

Belongs to the RNase Z family. Homodimer. The cofactor is Zn(2+).

It carries out the reaction Endonucleolytic cleavage of RNA, removing extra 3' nucleotides from tRNA precursor, generating 3' termini of tRNAs. A 3'-hydroxy group is left at the tRNA terminus and a 5'-phosphoryl group is left at the trailer molecule.. Functionally, zinc phosphodiesterase, which displays some tRNA 3'-processing endonuclease activity. Probably involved in tRNA maturation, by removing a 3'-trailer from precursor tRNA. This chain is Ribonuclease Z, found in Streptococcus suis (strain 98HAH33).